Consider the following 250-residue polypeptide: Thiamine thiazole synthase (250 aa).

Residues Ser-36, 55 to 56 (EE), Gly-63, Val-126, and 152 to 154 (HVD) contribute to the NAD(+) site. Fe cation is bound by residues Asp-154 and His-169. An NAD(+)-binding site is contributed by Met-216. Arg-226 is a binding site for glycine.

Belongs to the THI4 family. In terms of assembly, homooctamer; tetramer of dimers. Requires Fe(2+) as cofactor.

It catalyses the reaction hydrogen sulfide + glycine + NAD(+) = ADP-5-ethyl-4-methylthiazole-2-carboxylate + nicotinamide + 3 H2O + H(+). It functions in the pathway cofactor biosynthesis; thiamine diphosphate biosynthesis. Its function is as follows. Involved in the biosynthesis of the thiazole moiety of thiamine. Catalyzes the conversion of NAD and glycine to adenosine diphosphate 5-(2-hydroxyethyl)-4-methylthiazole-2-carboxylate (ADT), an adenylated thiazole intermediate, using free sulfide as a source of sulfur. This is Thiamine thiazole synthase from Thermotoga maritima (strain ATCC 43589 / DSM 3109 / JCM 10099 / NBRC 100826 / MSB8).